The following is a 59-amino-acid chain: UPF0181 protein YoaH (59 aa).

It belongs to the UPF0181 family.

The polypeptide is UPF0181 protein YoaH (Shigella flexneri).